Consider the following 149-residue polypeptide: Transcription factor bHLH153 (149 aa).

The bHLH domain maps to 27–76; sequence RHKSDLSFSSKERKDKVGERISALQQIVSPYGKTDTASVLLDAMHYIEFL.

This sequence belongs to the bHLH protein family.

Its subcellular location is the nucleus. This Arabidopsis thaliana (Mouse-ear cress) protein is Transcription factor bHLH153.